We begin with the raw amino-acid sequence, 651 residues long: Probable potassium transport system protein Kup (651 aa).

12 helical membrane-spanning segments follow: residues 41-61 (LVLG…IYAF), 82-102 (VVSF…VLFV), 130-150 (LILG…VITP), 163-183 (IVAP…LVTL), 194-214 (VAIV…ASGL), 235-255 (FLTV…LAMT), 276-296 (WLWI…AFIL), 309-329 (MIPS…TVIA), 366-386 (IYIP…VLGF), 395-415 (AYGI…YIVM), 426-446 (ALPI…ANII), and 450-470 (EGGW…WTWV).

Belongs to the HAK/KUP transporter (TC 2.A.72) family.

Its subcellular location is the cell inner membrane. It catalyses the reaction K(+)(in) + H(+)(in) = K(+)(out) + H(+)(out). Its function is as follows. Transport of potassium into the cell. Likely operates as a K(+):H(+) symporter. This is Probable potassium transport system protein Kup from Brucella ovis (strain ATCC 25840 / 63/290 / NCTC 10512).